The primary structure comprises 390 residues: Probable tRNA pseudouridine synthase D 2 (390 aa).

Aspartate 93 acts as the Nucleophile in catalysis. Positions 166 to 353 (YVLNYYGIQR…YGTRRKMVTP (188 aa)) constitute a TRUD domain.

It belongs to the pseudouridine synthase TruD family.

It carries out the reaction uridine(13) in tRNA = pseudouridine(13) in tRNA. Could be responsible for synthesis of pseudouridine from uracil-13 in transfer RNAs. The sequence is that of Probable tRNA pseudouridine synthase D 2 from Methanococcus maripaludis (strain DSM 14266 / JCM 13030 / NBRC 101832 / S2 / LL).